The following is an 86-amino-acid chain: Putative protein adenylyltransferase MJ1215 (86 aa).

The GSX(10)DXD motif motif lies at 35–49 (GSYARGEQKETSDID). Mg(2+) is bound by residues D47, D49, and D79.

This sequence belongs to the MntA antitoxin family. In terms of assembly, probably forms a complex with cognate toxin MJ1216. The cofactor is Mg(2+).

It carries out the reaction L-tyrosyl-[protein] + ATP = O-(5'-adenylyl)-L-tyrosyl-[protein] + diphosphate. It catalyses the reaction O-(5'-adenylyl)-L-tyrosyl-[protein] + ATP = O-[5'-(adenylyl-(5'-&gt;3')-adenylyl)]-L-tyrosyl-[protein] + diphosphate. In terms of biological role, probable antitoxin component of a putative type VII toxin-antitoxin (TA) system. Neutralizes cognate toxic MJ1216 by di-AMPylation. This Methanocaldococcus jannaschii (strain ATCC 43067 / DSM 2661 / JAL-1 / JCM 10045 / NBRC 100440) (Methanococcus jannaschii) protein is Putative protein adenylyltransferase MJ1215.